Reading from the N-terminus, the 556-residue chain is Urocanate hydratase (556 aa).

Residues 52–53 (GG), Gln130, 176–178 (GMG), Glu196, Arg201, 242–243 (NA), 263–267 (QTSAH), 273–274 (YL), and Tyr322 each bind NAD(+). The active site involves Cys410. Residue Gly492 coordinates NAD(+).

It belongs to the urocanase family. NAD(+) is required as a cofactor.

The protein resides in the cytoplasm. It catalyses the reaction 4-imidazolone-5-propanoate = trans-urocanate + H2O. Its pathway is amino-acid degradation; L-histidine degradation into L-glutamate; N-formimidoyl-L-glutamate from L-histidine: step 2/3. Functionally, catalyzes the conversion of urocanate to 4-imidazolone-5-propionate. In Bradyrhizobium sp. (strain ORS 278), this protein is Urocanate hydratase.